Reading from the N-terminus, the 303-residue chain is Protoheme IX farnesyltransferase (303 aa).

A run of 7 helical transmembrane segments spans residues 25–45 (MGLVQGNLIPAFAGSWLAIVL), 54–74 (IPQILMMLVGSTLIMGGACAL), 118–138 (LLFALNIPSGVIGLLGIVGYV), 151–171 (WNTVIGSFPGAVPPLIGWTAI), 177–197 (LVAVALFLVIFCWQPIHFYAL), 230–250 (LVVLLPLPFLLSSLGVTFIVL), and 280–300 (FIYSLNYLVVFFVLVVVISLI).

This sequence belongs to the UbiA prenyltransferase family. Protoheme IX farnesyltransferase subfamily. As to quaternary structure, interacts with CtaA.

It is found in the cell membrane. The catalysed reaction is heme b + (2E,6E)-farnesyl diphosphate + H2O = Fe(II)-heme o + diphosphate. It functions in the pathway porphyrin-containing compound metabolism; heme O biosynthesis; heme O from protoheme: step 1/1. Converts heme B (protoheme IX) to heme O by substitution of the vinyl group on carbon 2 of heme B porphyrin ring with a hydroxyethyl farnesyl side group. The protein is Protoheme IX farnesyltransferase of Staphylococcus saprophyticus subsp. saprophyticus (strain ATCC 15305 / DSM 20229 / NCIMB 8711 / NCTC 7292 / S-41).